The chain runs to 372 residues: Glutamate 5-kinase (372 aa).

Lys-14 is an ATP binding site. Residues Ser-54, Asp-141, and Asn-153 each contribute to the substrate site. 173-174 serves as a coordination point for ATP; the sequence is TD. The 79-residue stretch at 280–358 folds into the PUA domain; sequence RGHVVIDAGA…GEIESVLGYM (79 aa).

This sequence belongs to the glutamate 5-kinase family.

The protein resides in the cytoplasm. It carries out the reaction L-glutamate + ATP = L-glutamyl 5-phosphate + ADP. Its pathway is amino-acid biosynthesis; L-proline biosynthesis; L-glutamate 5-semialdehyde from L-glutamate: step 1/2. Its function is as follows. Catalyzes the transfer of a phosphate group to glutamate to form L-glutamate 5-phosphate. This Burkholderia lata (strain ATCC 17760 / DSM 23089 / LMG 22485 / NCIMB 9086 / R18194 / 383) protein is Glutamate 5-kinase.